A 278-amino-acid chain; its full sequence is Energy-coupling factor transporter ATP-binding protein EcfA (278 aa).

Residues 4 to 239 (LETRDLKYSY…SETVRSANLR (236 aa)) form the ABC transporter domain. 37–44 (GPNGAGKS) is a binding site for ATP.

This sequence belongs to the ABC transporter superfamily. Energy-coupling factor EcfA family. Forms a stable energy-coupling factor (ECF) transporter complex composed of 2 membrane-embedded substrate-binding proteins (S component), 2 ATP-binding proteins (A component) and 2 transmembrane proteins (T component).

It is found in the cell membrane. Its function is as follows. ATP-binding (A) component of a common energy-coupling factor (ECF) ABC-transporter complex. Unlike classic ABC transporters this ECF transporter provides the energy necessary to transport a number of different substrates. The polypeptide is Energy-coupling factor transporter ATP-binding protein EcfA (Methanococcus maripaludis (strain DSM 14266 / JCM 13030 / NBRC 101832 / S2 / LL)).